We begin with the raw amino-acid sequence, 309 residues long: NADH-cytochrome b5 reductase 1 (309 aa).

A helical transmembrane segment spans residues 30-50 (FVPYAVALTAILAGLKLFTGG). The 106-residue stretch at 60-165 (TEFQEFVLKE…RGPKGAMVYT (106 aa)) folds into the FAD-binding FR-type domain. FAD contacts are provided by residues 145–160 (TTLK…GPKG) and 171–208 (HIGM…KLDL).

The protein belongs to the flavoprotein pyridine nucleotide cytochrome reductase family. As to quaternary structure, monomer. Component of the 2-(3-amino-3-carboxypropyl)histidine synthase complex composed of dph1, dph2, dph3 and a NADH-dependent reductase, predominantly cbr1. FAD serves as cofactor.

The protein resides in the mitochondrion outer membrane. It catalyses the reaction 2 Fe(III)-[cytochrome b5] + NADH = 2 Fe(II)-[cytochrome b5] + NAD(+) + H(+). It carries out the reaction 2 Fe(3+)-[Dph3] + NADH = 2 Fe(2+)-[Dph3] + NAD(+) + H(+). The protein operates within protein modification; peptidyl-diphthamide biosynthesis. Its function is as follows. NADH-dependent reductase for dph3 and cytochrome b5. Required for the first step of diphthamide biosynthesis, a post-translational modification of histidine which occurs in elongation factor 2. Dph1 and dph2 transfer a 3-amino-3-carboxypropyl (ACP) group from S-adenosyl-L-methionine (SAM) to a histidine residue, the reaction is assisted by a reduction system comprising dph3 and a NADH-dependent reductase, predominantly cbr1. By reducing dph3, also involved in the formation of the tRNA wobble base modification mcm5s 2U (5-methoxycarbonylmethyl-2-thiouridine), mediated by the elongator complex. The cytochrome b5/NADH cytochrome b5 reductase electron transfer system supports the catalytic activity of several sterol biosynthetic enzymes. The polypeptide is NADH-cytochrome b5 reductase 1 (cbr1) (Neosartorya fischeri (strain ATCC 1020 / DSM 3700 / CBS 544.65 / FGSC A1164 / JCM 1740 / NRRL 181 / WB 181) (Aspergillus fischerianus)).